We begin with the raw amino-acid sequence, 1019 residues long: Clotting factor C (1019 aa).

A signal peptide spans 1 to 25 (MVLASFLVSGLVLGILAQQMRPVQS). The 36-residue stretch at 102-137 (YGTWCSGECQCKNGGICDQRTGACTCRDRYEGAHCE) folds into the EGF-like domain. Intrachain disulfides connect Cys-110/Cys-118, Cys-112/Cys-125, Cys-127/Cys-136, Cys-142/Cys-182, Cys-168/Cys-195, Cys-199/Cys-241, Cys-227/Cys-254, Cys-260/Cys-308, Cys-294/Cys-321, Cys-331/Cys-350, Cys-354/Cys-374, Cys-464/Cys-564, Cys-538/Cys-556, Cys-576/Cys-621, Cys-607/Cys-634, and Cys-720/Cys-748. Sushi domains follow at residues 140–197 (KGCP…KCIR), 198–256 (ECAK…QCKK), and 258–323 (VFCP…SCVK). One can recognise an LCCL domain in the interval 325–421 (ADREVDCDSK…EELKSLARSF (97 aa)). The region spanning 436–568 (CPDGWFEVEE…PSSFACMMDL (133 aa)) is the C-type lectin domain. Asn-523 and Asn-534 each carry an N-linked (GlcNAc...) asparagine glycan. Sushi domains follow at residues 574 to 636 (AKCD…RCIK) and 689 to 750 (PRSS…SCIP). N-linked (GlcNAc...) asparagine glycosylation is found at Asn-624, Asn-740, and Asn-767. One can recognise a Peptidase S1 domain in the interval 763 to 1019 (IWNGNSTEIG…VFLSWIRQFI (257 aa)). A disulfide bridge connects residues Cys-794 and Cys-810. Active-site charge relay system residues include His-809 and Asp-865. An N-linked (GlcNAc...) asparagine glycan is attached at Asn-912. A disulfide bridge connects residues Cys-932 and Cys-951. Residue Asp-960 participates in substrate binding. A disulfide bridge connects residues Cys-962 and Cys-996. The active-site Charge relay system is Ser-966.

This sequence belongs to the peptidase S1 family. In terms of assembly, heterodimer of a light chain and a heavy chain linked by a disulfide bond. Forms a covalent heterodimer with intracellular coagulation inhibitor 1/LICI-1. Forms a covalent heterodimer with intracellular coagulation inhibitor 2/LICI-2. In terms of processing, N-glycosylated. Lipopolysaccharide (LPS) activates clotting factor C by inducing the proteolytic cleavage of the clotting factor C light chain into clotting factor C chains A and B. Clotting factor C chains heavy, A and B remain associated via interchain disulfide bonds. As to expression, expressed in hemocytes (at protein level).

The protein resides in the secreted. The catalysed reaction is Selective cleavage of 103-Arg-|-Ser-104 and 124-Ile-|-Ile-125 bonds in Limulus clotting factor B to form activated factor B. Cleavage of -Pro-Arg-|-Xaa- bonds in synthetic substrates.. Its activity is regulated as follows. Activated by Gram-negative bacterial lipopolysaccharides. Inhibited by intracellular coagulation inhibitor 1/LICI-1 and to a lesser extent by intracellular coagulation inhibitors 2/LICI-2 and 3/LICI-3. Inhibited by the small molecule diisopropyl fluorophosphate (DFP). In terms of biological role, this enzyme is closely associated with an endotoxin-sensitive hemolymph coagulation system which may play important roles in both hemostasis and host defense mechanisms. Its active form catalyzes the activation of clotting factor B. This chain is Clotting factor C, found in Tachypleus tridentatus (Japanese horseshoe crab).